The sequence spans 416 residues: Leu/Ile/Val-binding protein homolog 4 (416 aa).

The first 26 residues, 1-26 (MSLKVFLQAGVACAALSLAGAAGASA), serve as a signal peptide directing secretion.

This sequence belongs to the leucine-binding protein family.

In terms of biological role, component of an amino-acid transport system. This is Leu/Ile/Val-binding protein homolog 4 from Brucella melitensis biotype 1 (strain ATCC 23456 / CCUG 17765 / NCTC 10094 / 16M).